A 365-amino-acid chain; its full sequence is Parathion hydrolase (365 aa).

The segment at residues 1–29 (MQTRRVVLKSAAAAGTLLGGLAGCASVAG) is a signal peptide (tat-type signal). Histidine 55, histidine 57, lysine 169, histidine 201, histidine 230, and aspartate 301 together coordinate Zn(2+). An N6-carboxylysine modification is found at lysine 169.

The protein belongs to the metallo-dependent hydrolases superfamily. Phosphotriesterase family. As to quaternary structure, homodimer. Zn(2+) is required as a cofactor. Predicted to be exported by the Tat system. The position of the signal peptide cleavage has been experimentally proven.

The protein localises to the cell membrane. It catalyses the reaction An aryl dialkyl phosphate + H2O = dialkyl phosphate + an aryl alcohol.. Functionally, has an unusual substrate specificity for synthetic organophosphate triesters and phosphorofluoridates. All of the phosphate triesters found to be substrates are synthetic compounds. The identity of any naturally occurring substrate for the enzyme is unknown. Has no detectable activity with phosphate monoesters or diesters and no activity as an esterase or protease. It catalyzes the hydrolysis of the insecticide paraoxon at a rate approaching the diffusion limit and thus appears to be optimally evolved for utilizing this synthetic substrate. This Brevundimonas diminuta (Pseudomonas diminuta) protein is Parathion hydrolase (opd).